A 165-amino-acid chain; its full sequence is Nucleotide-binding protein Rcas_1283 (165 aa).

It belongs to the YajQ family.

In terms of biological role, nucleotide-binding protein. This chain is Nucleotide-binding protein Rcas_1283, found in Roseiflexus castenholzii (strain DSM 13941 / HLO8).